A 207-amino-acid polypeptide reads, in one-letter code: Small ribosomal subunit protein uS4 (207 aa).

Residues 31-54 form a disordered region; it reads KCKLDTKPGQHGRTSGSRTSDYGN. A compositionally biased stretch (polar residues) spans 42-53; it reads GRTSGSRTSDYG. Residues 97–158 form the S4 RNA-binding domain; it reads SRLDNVVYRM…KAKKQARITE (62 aa).

It belongs to the universal ribosomal protein uS4 family. As to quaternary structure, part of the 30S ribosomal subunit. Contacts protein S5. The interaction surface between S4 and S5 is involved in control of translational fidelity.

Functionally, one of the primary rRNA binding proteins, it binds directly to 16S rRNA where it nucleates assembly of the body of the 30S subunit. With S5 and S12 plays an important role in translational accuracy. This is Small ribosomal subunit protein uS4 from Polynucleobacter asymbioticus (strain DSM 18221 / CIP 109841 / QLW-P1DMWA-1) (Polynucleobacter necessarius subsp. asymbioticus).